Here is a 234-residue protein sequence, read N- to C-terminus: Phosphoribosylaminoimidazole-succinocarboxamide synthase (234 aa).

Belongs to the SAICAR synthetase family.

It catalyses the reaction 5-amino-1-(5-phospho-D-ribosyl)imidazole-4-carboxylate + L-aspartate + ATP = (2S)-2-[5-amino-1-(5-phospho-beta-D-ribosyl)imidazole-4-carboxamido]succinate + ADP + phosphate + 2 H(+). Its pathway is purine metabolism; IMP biosynthesis via de novo pathway; 5-amino-1-(5-phospho-D-ribosyl)imidazole-4-carboxamide from 5-amino-1-(5-phospho-D-ribosyl)imidazole-4-carboxylate: step 1/2. In Exiguobacterium sp. (strain ATCC BAA-1283 / AT1b), this protein is Phosphoribosylaminoimidazole-succinocarboxamide synthase.